We begin with the raw amino-acid sequence, 187 residues long: Peptidyl-tRNA hydrolase (187 aa).

Tyr14 lines the tRNA pocket. The active-site Proton acceptor is His19. Positions 63 and 65 each coordinate tRNA.

This sequence belongs to the PTH family. Monomer.

It is found in the cytoplasm. The catalysed reaction is an N-acyl-L-alpha-aminoacyl-tRNA + H2O = an N-acyl-L-amino acid + a tRNA + H(+). Its function is as follows. Hydrolyzes ribosome-free peptidyl-tRNAs (with 1 or more amino acids incorporated), which drop off the ribosome during protein synthesis, or as a result of ribosome stalling. In terms of biological role, catalyzes the release of premature peptidyl moieties from peptidyl-tRNA molecules trapped in stalled 50S ribosomal subunits, and thus maintains levels of free tRNAs and 50S ribosomes. The polypeptide is Peptidyl-tRNA hydrolase (Thermodesulfovibrio yellowstonii (strain ATCC 51303 / DSM 11347 / YP87)).